The primary structure comprises 319 residues: HTH-type transcriptional regulator YidZ (319 aa).

Residues 8 to 65 (LDLNLLLCLQLLMQERSVTKAAKRMNVTPSAVSKSLAKLRAWFDDPLFVNTPLGLAPT) enclose the HTH lysR-type domain. The H-T-H motif DNA-binding region spans 25-44 (VTKAAKRMNVTPSAVSKSLA).

Belongs to the LysR transcriptional regulatory family.

In terms of biological role, involved in anaerobic NO protection. In Salmonella agona (strain SL483), this protein is HTH-type transcriptional regulator YidZ.